We begin with the raw amino-acid sequence, 811 residues long: G-type lectin S-receptor-like serine/threonine-protein kinase LECRK2 (811 aa).

The N-terminal stretch at 1–23 (MAPILFLPILQILLIYCTKSAQA) is a signal peptide. In terms of domain architecture, Bulb-type lectin spans 24–153 (QLNISIGSSL…DGATKWESFG (130 aa)). At 24–464 (QLNISIGSSL…DKKYWILGSS (441 aa)) the chain is on the extracellular side. Residues Asn-26, Asn-39, Asn-59, Asn-219, Asn-226, Asn-237, and Asn-242 are each glycosylated (N-linked (GlcNAc...) asparagine). Positions 292 to 344 (PENICQTIQTKVGSGACGFNSYCTFDGTKNTTNCLCPQRYKFFDNERTYKGCR) constitute an EGF-like; atypical domain. Intrachain disulfides connect Cys-296-Cys-314, Cys-308-Cys-325, Cys-327-Cys-343, Cys-389-Cys-411, and Cys-393-Cys-399. Asn-321 carries N-linked (GlcNAc...) asparagine glycosylation. Residues 352 to 436 (CDLDETAAMV…LQATVLLKVP (85 aa)) enclose the PAN domain. A helical membrane pass occupies residues 465 to 485 (LFFGSSVLVNFLLIFVLLFGT). Over 486–811 (YCSITSRKKT…DPSSYISSLA (326 aa)) the chain is Cytoplasmic. The 275-residue stretch at 521 to 795 (GGFHEVLGTG…KVMQMLDGAV (275 aa)) folds into the Protein kinase domain. Residues 527–535 (LGTGASGIV) and Lys-551 each bind ATP. Asp-645 serves as the catalytic Proton acceptor.

Belongs to the protein kinase superfamily. Ser/Thr protein kinase family.

It localises to the membrane. The catalysed reaction is L-seryl-[protein] + ATP = O-phospho-L-seryl-[protein] + ADP + H(+). It carries out the reaction L-threonyl-[protein] + ATP = O-phospho-L-threonyl-[protein] + ADP + H(+). Involved in resistance against the herbivorous insect brown planthopper (N.lugens, BPH). Member of the BPH3 (BPH resistance locus 3) cluster which contains LECRK1, LECRK2 and LECRK3. The protein is G-type lectin S-receptor-like serine/threonine-protein kinase LECRK2 of Oryza sativa subsp. indica (Rice).